Here is a 555-residue protein sequence, read N- to C-terminus: Glutamine--tRNA ligase (555 aa).

The 'HIGH' region signature appears at 34–44; that stretch reads PEPNGYLHIGH. ATP is bound by residues 35–37 and 41–47; these read EPN and HIGHAKS. The L-glutamine site is built by D67 and Y212. ATP is bound by residues T231, 261–262, and 269–271; these read RL and MSK. Residues 268-272 carry the 'KMSKS' region motif; the sequence is IMSKR.

This sequence belongs to the class-I aminoacyl-tRNA synthetase family. In terms of assembly, monomer.

It localises to the cytoplasm. The catalysed reaction is tRNA(Gln) + L-glutamine + ATP = L-glutaminyl-tRNA(Gln) + AMP + diphosphate. In Yersinia enterocolitica serotype O:8 / biotype 1B (strain NCTC 13174 / 8081), this protein is Glutamine--tRNA ligase.